The following is a 188-amino-acid chain: Ion-translocating oxidoreductase complex subunit B (188 aa).

The interval 1-26 (MNGVFLAIGALLPICLAGGALLGYAA) is hydrophobic. Residues 32–90 (QGDPVAEQVNALLPQTQCGQCGYPGCKPYAEAIAAGDKINKCPPGGEATIRALADLLDL) form the 4Fe-4S domain. The [4Fe-4S] cluster site is built by Cys-49, Cys-52, Cys-57, Cys-73, Cys-113, Cys-116, Cys-119, Cys-123, Cys-143, Cys-146, Cys-149, and Cys-153. 2 4Fe-4S ferredoxin-type domains span residues 104-133 (RVAY…GAAR) and 134-163 (LMHT…MRET).

Belongs to the 4Fe4S bacterial-type ferredoxin family. RnfB subfamily. As to quaternary structure, the complex is composed of six subunits: RnfA, RnfB, RnfC, RnfD, RnfE and RnfG. [4Fe-4S] cluster serves as cofactor.

Its subcellular location is the cell inner membrane. Functionally, part of a membrane-bound complex that couples electron transfer with translocation of ions across the membrane. The protein is Ion-translocating oxidoreductase complex subunit B of Pseudomonas aeruginosa (strain UCBPP-PA14).